Here is a 315-residue protein sequence, read N- to C-terminus: Protein-export membrane protein SecF (315 aa).

The next 6 membrane-spanning stretches (helical) occupy residues 35–55 (MVLYPLVVFLVAALILAVHFP), 152–172 (QGIKAVIYAFIGMAIVVFLFF), 181–201 (IIFSAFSDMVIALATMGILGI), 205–225 (TATIAALLMLIGYTVDSNILL), 242–264 (LSAVSTGFTMSTTTLGALFILWL), and 282–302 (LLADFMNTWIFNAGVLRWYIA).

This sequence belongs to the SecD/SecF family. SecF subfamily. Part of the protein translocation apparatus. Forms a complex with SecD.

It localises to the cell membrane. Its function is as follows. Involved in protein export. The chain is Protein-export membrane protein SecF from Thermococcus gammatolerans (strain DSM 15229 / JCM 11827 / EJ3).